The following is a 3298-amino-acid chain: Protocadherin-16 (3298 aa).

An N-terminal signal peptide occupies residues 1 to 42 (MQKELGIVPSCPGMKSPRPHLLLPLLLLLLLLLGAGVPGAWG). 27 Cadherin domains span residues 43 to 143 (QAGS…APAF), 144 to 255 (PQAR…APAF), 256 to 362 (NQSR…QPSM), 367 to 472 (LSAD…APAF), 474 to 578 (RQLY…EPQF), 579 to 685 (QRTF…PPQF), 686 to 790 (YPRE…PPIF), 791 to 894 (EQLQ…SPAF), 895 to 1000 (PAPE…APRF), 1001 to 1111 (NSPT…DPTF), 1112 to 1211 (LAVA…SPTF), 1218 to 1324 (AGGG…PPDL), 1333 to 1436 (VPVV…APAF), 1437 to 1546 (ARDP…APVF), 1547 to 1649 (ASPS…APTF), 1650 to 1751 (QQQE…APTF), 1752 to 1855 (GSAH…APAF), 1856 to 1960 (PVPA…APTF), 1965 to 2068 (LRLR…GPRF), 2069 to 2171 (PRAS…APRF), 2172 to 2277 (LRPH…RPTI), 2278 to 2376 (PQPW…APAF), 2377 to 2482 (SQSL…APSF), 2483 to 2602 (TLSH…PPVF), 2603 to 2706 (TRAS…GPAF), 2707 to 2813 (PLNL…DPVF), and 2814 to 2933 (LAPA…APDL). At 43 to 2940 (QAGSLDLQID…PDLNLLLVGA (2898 aa)) the chain is on the extracellular side. Residues Asn217, Asn256, and Asn402 are each glycosylated (N-linked (GlcNAc...) asparagine). An N-linked (GlcNAc...) asparagine glycan is attached at Asn584. Asn1249 carries N-linked (GlcNAc...) asparagine glycosylation. Asn1521 carries an N-linked (GlcNAc...) asparagine glycan. A glycan (N-linked (GlcNAc...) asparagine) is linked at Asn1718. The N-linked (GlcNAc...) asparagine glycan is linked to Asn1996. A disordered region spans residues 2065–2094 (GPRFPRASSEATIRENAPPGTPIVSPRAVH). 3 N-linked (GlcNAc...) asparagine glycosylation sites follow: Asn2361, Asn2428, and Asn2569. N-linked (GlcNAc...) asparagine glycosylation is found at Asn2761, Asn2792, and Asn2862. A helical transmembrane segment spans residues 2941-2961 (VAASLGVVVVLALAALVLGLV). At 2962 to 3298 (RARSRKAEAA…EPPDDTELHI (337 aa)) the chain is on the cytoplasmic side. The tract at residues 2986–3040 (LQKLGREPPSPPPSEHLYHQTLPSYGGPGAGGPYPRGGSLDPSHSSGRGSAEAAE) is disordered. Gly residues predominate over residues 3011–3020 (GGPGAGGPYP). At Ser3055 the chain carries Phosphoserine. Disordered stretches follow at residues 3062–3082 (ARGPDSGIQQDADGLSDTSCE) and 3233–3298 (ASHR…ELHI). Composition is skewed to low complexity over residues 3244–3266 (SLSSAAMSPSFSPSLSPLAARSP) and 3276–3289 (GPSASALSAESGLE).

Heterophilic interaction with FAT4; this interaction affects their respective protein levels. Expressed in fibroblasts but not in melanocytes or keratinocytes.

The protein localises to the cell membrane. Functionally, calcium-dependent cell-adhesion protein. Mediates functions in neuroprogenitor cell proliferation and differentiation. In the heart, has a critical role for proper morphogenesis of the mitral valve, acting in the regulation of cell migration involved in valve formation. This is Protocadherin-16 (DCHS1) from Homo sapiens (Human).